Consider the following 295-residue polypeptide: Cyclic dipyrimidine nucleotide synthase CdnE (295 aa).

Residues methionine 1–glutamate 28 form a disordered region. Polar residues predominate over residues aspartate 7 to serine 19. Residues glutamine 51 and serine 53 each coordinate UTP. Mg(2+) is bound at residue aspartate 67. UTP contacts are provided by lysine 123, asparagine 169, arginine 197, phenylalanine 217, and lysine 276. Positions arginine 275–tryptophan 277 match the Pyrimidine specificity motif (R/Q)xW in donor pocket motif.

The protein belongs to the CD-NTase family. E02 subfamily. Monomer. It depends on Mg(2+) as a cofactor.

The catalysed reaction is 2 UTP = c-di-UMP + 2 diphosphate. It carries out the reaction UTP + CTP = cyclic CMP-UMP + 2 diphosphate. In terms of biological role, cyclic nucleotide synthase (second messenger synthase) of a CBASS antivirus system. CBASS (cyclic oligonucleotide-based antiphage signaling system) provides immunity against bacteriophage. The CD-NTase protein synthesizes cyclic nucleotides in response to infection; these serve as specific second messenger signals. The signals activate a diverse range of effectors, leading to bacterial cell death and thus abortive phage infection. A type I-B(UU) CBASS system. This chain is Cyclic dipyrimidine nucleotide synthase CdnE, found in Cecembia lonarensis (strain CCUG 58316 / KCTC 22772 / LW9).